Consider the following 63-residue polypeptide: Large ribosomal subunit protein bL35 (63 aa).

It belongs to the bacterial ribosomal protein bL35 family.

The sequence is that of Large ribosomal subunit protein bL35 from Campylobacter curvus (strain 525.92).